The primary structure comprises 113 residues: uncharacterized protein (113 aa).

The transit peptide at Met1–Phe14 directs the protein to the mitochondrion. The interval Gln41–Asp79 is disordered. Low complexity predominate over residues Ser55–Gly73.

It is found in the mitochondrion. This is an uncharacterized protein from Arabidopsis thaliana (Mouse-ear cress).